The primary structure comprises 147 residues: Peptide methionine sulfoxide reductase MsrA (147 aa).

Cysteine 10 is a catalytic residue.

It belongs to the MsrA Met sulfoxide reductase family.

The catalysed reaction is L-methionyl-[protein] + [thioredoxin]-disulfide + H2O = L-methionyl-(S)-S-oxide-[protein] + [thioredoxin]-dithiol. The enzyme catalyses [thioredoxin]-disulfide + L-methionine + H2O = L-methionine (S)-S-oxide + [thioredoxin]-dithiol. Functionally, has an important function as a repair enzyme for proteins that have been inactivated by oxidation. Catalyzes the reversible oxidation-reduction of methionine sulfoxide in proteins to methionine. The protein is Peptide methionine sulfoxide reductase MsrA of Pelagibacter ubique (strain HTCC1062).